The following is a 63-amino-acid chain: Large ribosomal subunit protein bL35 (63 aa).

It belongs to the bacterial ribosomal protein bL35 family.

This Sulfurimonas denitrificans (strain ATCC 33889 / DSM 1251) (Thiomicrospira denitrificans (strain ATCC 33889 / DSM 1251)) protein is Large ribosomal subunit protein bL35.